Here is a 200-residue protein sequence, read N- to C-terminus: Glutathione S-transferase 1-1 (200 aa).

One can recognise a GST N-terminal domain in the interval 1–73 (GSSPCRSVIM…YLVEKYGKTD (73 aa)). Glutathione contacts are provided by residues Ser-2, 43–45 (HTI), and 57–59 (ESR). Positions 79-200 (CPKKRAVINQ…AGCLEFKKFF (122 aa)) constitute a GST C-terminal domain.

It belongs to the GST superfamily. Theta family. In terms of assembly, homodimer.

It carries out the reaction RX + glutathione = an S-substituted glutathione + a halide anion + H(+). The catalysed reaction is 1,1,1-trichloro-2,2-bis(4-chlorophenyl)ethane = 1,1-dichloro-2,2-bis(4-chlorophenyl)ethylene + chloride + H(+). Conjugation of reduced glutathione to a wide number of exogenous and endogenous hydrophobic electrophiles. Has DDT dehydrochlorinase activity. The protein is Glutathione S-transferase 1-1 (GstD1) of Drosophila mauritiana (Fruit fly).